The following is a 288-amino-acid chain: ATP synthase gamma chain (288 aa).

It belongs to the ATPase gamma chain family. As to quaternary structure, F-type ATPases have 2 components, CF(1) - the catalytic core - and CF(0) - the membrane proton channel. CF(1) has five subunits: alpha(3), beta(3), gamma(1), delta(1), epsilon(1). CF(0) has three main subunits: a, b and c.

The protein resides in the cell inner membrane. In terms of biological role, produces ATP from ADP in the presence of a proton gradient across the membrane. The gamma chain is believed to be important in regulating ATPase activity and the flow of protons through the CF(0) complex. This is ATP synthase gamma chain from Chromobacterium violaceum (strain ATCC 12472 / DSM 30191 / JCM 1249 / CCUG 213 / NBRC 12614 / NCIMB 9131 / NCTC 9757 / MK).